A 216-amino-acid polypeptide reads, in one-letter code: CDP-diacylglycerol--glycerol-3-phosphate 3-phosphatidyltransferase (216 aa).

4 consecutive transmembrane segments (helical) span residues 40 to 60 (VVSI…FLDG), 88 to 108 (VMLC…CILY), 141 to 161 (MGAV…LAGA), and 176 to 196 (VVPV…FFPI).

It belongs to the CDP-alcohol phosphatidyltransferase class-I family.

The protein resides in the cell membrane. It catalyses the reaction a CDP-1,2-diacyl-sn-glycerol + sn-glycerol 3-phosphate = a 1,2-diacyl-sn-glycero-3-phospho-(1'-sn-glycero-3'-phosphate) + CMP + H(+). The protein operates within phospholipid metabolism; phosphatidylglycerol biosynthesis; phosphatidylglycerol from CDP-diacylglycerol: step 1/2. This protein catalyzes the committed step to the synthesis of the acidic phospholipids. The chain is CDP-diacylglycerol--glycerol-3-phosphate 3-phosphatidyltransferase (pgsA) from Treponema pallidum (strain Nichols).